The chain runs to 390 residues: GTPase Obg (390 aa).

Residues 1 to 159 (MKFVDEAAIL…RELMLELLLL (159 aa)) form the Obg domain. The OBG-type G domain occupies 160 to 333 (ADVGMLGLPN…LCWDVMSFLN (174 aa)). GTP-binding positions include 166–173 (GLPNAGKS), 191–195 (FTTLI), 213–216 (DIPG), 283–286 (NKID), and 314–316 (SAA). Mg(2+) contacts are provided by Ser173 and Thr193. The segment covering 364 to 384 (VEAEAEDDWDDDWDEEDDDGV) has biased composition (acidic residues). The tract at residues 364-390 (VEAEAEDDWDDDWDEEDDDGVEIIYER) is disordered.

It belongs to the TRAFAC class OBG-HflX-like GTPase superfamily. OBG GTPase family. As to quaternary structure, monomer. It depends on Mg(2+) as a cofactor.

Its subcellular location is the cytoplasm. Functionally, an essential GTPase which binds GTP, GDP and possibly (p)ppGpp with moderate affinity, with high nucleotide exchange rates and a fairly low GTP hydrolysis rate. Plays a role in control of the cell cycle, stress response, ribosome biogenesis and in those bacteria that undergo differentiation, in morphogenesis control. The protein is GTPase Obg of Yersinia pestis.